A 74-amino-acid chain; its full sequence is U3-agatoxin-Ao1h (74 aa).

Residues M1–A20 form the signal peptide. Residues V21–R34 constitute a propeptide that is removed on maturation. Disulfide bonds link C37–C53, C44–C58, C52–C68, and C60–C66. The residue at position 72 (N72) is an Asparagine amide.

This sequence belongs to the neurotoxin 07 (Beta/delta-agtx) family. 03 (aga-4) subfamily. Aga sub-subfamily. Expressed by the venom gland.

The protein resides in the secreted. Insecticidal neurotoxin that induces an irreversible spastic paralysis when injected into insects. Modifies presynaptic voltage-gated sodium channels (Nav), causing them to open at the normal resting potential of the nerve. This leads to spontaneous release of neurotransmitter and repetitive action potentials in motor neurons. This Agelena orientalis (Funnel-web spider) protein is U3-agatoxin-Ao1h.